The primary structure comprises 85 residues: Large ribosomal subunit protein bL27 (85 aa).

Over residues 1-10 (MAQKKGGGST) the composition is skewed to gly residues. Positions 1 to 20 (MAQKKGGGSTRNGRDSKPKM) are disordered.

Belongs to the bacterial ribosomal protein bL27 family.

This is Large ribosomal subunit protein bL27 from Acidovorax ebreus (strain TPSY) (Diaphorobacter sp. (strain TPSY)).